Reading from the N-terminus, the 185-residue chain is MNWRSEHIWIELLKGSRKRGNFFWACILFLGSLGFLAVGASSYLGKNMISLLPSQQILFFPQGVVMSFYGIAGLFISSYLWCTILWNVGSGYDRFDRKEGIVCIFRWGFPGIKRRIFLQFLVRDIQSIRIQVKEGLYPRRILYMEIRGQGVIPLTRTDEKFFTPREIEQKAAELAYFLGVPIEVF.

Transmembrane regions (helical) follow at residues glycine 20–alanine 40 and isoleucine 57–serine 77.

This sequence belongs to the Ycf4 family.

The protein localises to the plastid. It localises to the chloroplast thylakoid membrane. Seems to be required for the assembly of the photosystem I complex. The polypeptide is Photosystem I assembly protein Ycf4 (Sorghum bicolor (Sorghum)).